The primary structure comprises 331 residues: 6-phosphogluconolactonase (331 aa).

The protein belongs to the cycloisomerase 2 family.

The catalysed reaction is 6-phospho-D-glucono-1,5-lactone + H2O = 6-phospho-D-gluconate + H(+). It participates in carbohydrate degradation; pentose phosphate pathway; D-ribulose 5-phosphate from D-glucose 6-phosphate (oxidative stage): step 2/3. Functionally, catalyzes the hydrolysis of 6-phosphogluconolactone to 6-phosphogluconate. In Salmonella choleraesuis (strain SC-B67), this protein is 6-phosphogluconolactonase.